Consider the following 416-residue polypeptide: Calreticulin (416 aa).

A signal peptide spans 1–25; sequence MENRGRNPSFLSLLLLLSLFAIASA. N-linked (GlcNAc...) asparagine glycosylation occurs at Asn57. Cysteines 111 and 143 form a disulfide. Residues Tyr115, Lys117, Tyr134, and Asp141 each coordinate an alpha-D-glucoside. N-linked (GlcNAc...) asparagine glycosylation occurs at Asn157. 7 consecutive repeat copies span residues 197–208, 216–227, 233–244, 251–262, 266–276, 280–290, and 294–304. The interval 197–262 is 4 X approximate repeats; the sequence is KQTGSLYTDW…EAKKPEDWDD (66 aa). Basic and acidic residues predominate over residues 217 to 241; that stretch reads PEAKKPEDWDDKEFIPDPEDKKPEG. The disordered stretch occupies residues 217-281; the sequence is PEAKKPEDWD…TIPNPEYKGP (65 aa). Residues 266–304 form a 3 X approximate repeats region; sequence GEWTAPTIPNPEYKGPWKAKKIKNPNYKGKWKAPMIDNP. An an alpha-D-glucoside-binding site is contributed by Glu324. Basic and acidic residues predominate over residues 351 to 381; sequence EETWGKQKDAEKAAFEELEKKREEEETKDDP. Positions 351–416 are disordered; that stretch reads EETWGKQKDA…DKDDDQHDEL (66 aa). Residues 382–400 show a composition bias toward acidic residues; it reads VESDAEDEDEAEADDSDKD. The span at 401–416 shows a compositional bias: basic and acidic residues; that stretch reads DADKSDDKDDDQHDEL. The Prevents secretion from ER motif lies at 413–416; it reads HDEL.

Belongs to the calreticulin family.

Its subcellular location is the endoplasmic reticulum lumen. Its function is as follows. Molecular calcium-binding chaperone promoting folding, oligomeric assembly and quality control in the ER via the calreticulin/calnexin cycle. This lectin may interact transiently with almost all of the monoglucosylated glycoproteins that are synthesized in the ER. The protein is Calreticulin of Beta vulgaris (Sugar beet).